Here is a 259-residue protein sequence, read N- to C-terminus: DNA adenine methylase (259 aa).

S-adenosyl-L-methionine is bound by residues tyrosine 7, lysine 11, aspartate 50, and aspartate 171.

This sequence belongs to the N(4)/N(6)-methyltransferase family. As to quaternary structure, monomer.

The catalysed reaction is a 2'-deoxyadenosine in DNA + S-adenosyl-L-methionine = an N(6)-methyl-2'-deoxyadenosine in DNA + S-adenosyl-L-homocysteine + H(+). An alpha subtpe methyltransferase that recognizes the double-stranded sequence 5'-GATC-3' and methylates A-2 on both strands. May prevent degradation of viral DNA by the host restriction-modification antiviral defense system. The protein is DNA adenine methylase of Enterobacteria phage T2 (Bacteriophage T2).